A 189-amino-acid polypeptide reads, in one-letter code: Elongation factor P (189 aa).

The residue at position 34 (K34) is an N6-(3,6-diaminohexanoyl)-5-hydroxylysine.

It belongs to the elongation factor P family. In terms of processing, may be beta-lysylated on the epsilon-amino group of Lys-34 by the combined action of EpmA and EpmB, and then hydroxylated on the C5 position of the same residue by EpmC (if this protein is present). Lysylation is critical for the stimulatory effect of EF-P on peptide-bond formation. The lysylation moiety may extend toward the peptidyltransferase center and stabilize the terminal 3-CCA end of the tRNA. Hydroxylation of the C5 position on Lys-34 may allow additional potential stabilizing hydrogen-bond interactions with the P-tRNA.

The protein localises to the cytoplasm. Its pathway is protein biosynthesis; polypeptide chain elongation. In terms of biological role, involved in peptide bond synthesis. Alleviates ribosome stalling that occurs when 3 or more consecutive Pro residues or the sequence PPG is present in a protein, possibly by augmenting the peptidyl transferase activity of the ribosome. Modification of Lys-34 is required for alleviation. The protein is Elongation factor P of Saccharophagus degradans (strain 2-40 / ATCC 43961 / DSM 17024).